We begin with the raw amino-acid sequence, 445 residues long: Phosphoglucosamine mutase (445 aa).

Serine 102 (phosphoserine intermediate) is an active-site residue. Residues serine 102, aspartate 241, aspartate 243, and aspartate 245 each coordinate Mg(2+). Serine 102 bears the Phosphoserine mark.

It belongs to the phosphohexose mutase family. It depends on Mg(2+) as a cofactor. In terms of processing, activated by phosphorylation.

The enzyme catalyses alpha-D-glucosamine 1-phosphate = D-glucosamine 6-phosphate. Catalyzes the conversion of glucosamine-6-phosphate to glucosamine-1-phosphate. The polypeptide is Phosphoglucosamine mutase (Haemophilus influenzae (strain 86-028NP)).